The following is a 447-amino-acid chain: Tetratricopeptide repeat protein 23 (447 aa).

TPR repeat units lie at residues 45 to 78 (LHLC…TRIC), 137 to 170 (IELF…SKEL), 186 to 219 (ARIR…VEIS), and 356 to 389 (AETY…QTLL).

In terms of assembly, found Associated with the EvC complex composed of EFCAB7, IQCE, EVC2 and EVC.

The protein resides in the cell projection. It is found in the cilium. Its function is as follows. Participates positively in the ciliary Hedgehog (Hh) signaling. The chain is Tetratricopeptide repeat protein 23 (TTC23) from Homo sapiens (Human).